A 388-amino-acid chain; its full sequence is Na(+)/H(+) antiporter NhaA (388 aa).

The Cytoplasmic portion of the chain corresponds to 1 to 11; sequence MKHLHRFFSSD. Residues 12-31 form a helical membrane-spanning segment; that stretch reads ASGGIILIIAAILAMIMANS. Residues 32-58 are Periplasmic-facing; the sequence is GATSGWYHDFLETPVQLRVGSLEINKN. Residues 45 to 58 are important for dimerization; that stretch reads PVQLRVGSLEINKN. Residues 59 to 80 traverse the membrane as a helical segment; that stretch reads MLLWINDALMAVFFLLVGLEVK. The Cytoplasmic portion of the chain corresponds to 81 to 96; sequence RELMQGSLASLRQAAF. The chain crosses the membrane as a helical span at residues 97 to 116; that stretch reads PVIAAIGGMIVPALLYLAFN. At 117-122 the chain is on the periplasmic side; the sequence is YADPIT. The helical transmembrane segment at 123-130 threads the bilayer; the sequence is REGWAIPA. Over 131 to 154 the chain is Cytoplasmic; that stretch reads ATDIAFALGVLALLGSRVPLALKI. The chain crosses the membrane as a helical span at residues 155–176; that stretch reads FLMALAIIDDLGAIIIIALFYT. Over 177 to 180 the chain is Periplasmic; the sequence is NDLS. A helical transmembrane segment spans residues 181–200; the sequence is MASLGVAAVAIAVLAVLNLC. Residues 201–204 lie on the Cytoplasmic side of the membrane; sequence GARR. The helical transmembrane segment at 205–222 threads the bilayer; the sequence is TGVYILVGVVLWTAVLKS. Position 223 (Gly-223) is a topological domain, periplasmic. A helical transmembrane segment spans residues 224–236; it reads VHATLAGVIVGFF. The Cytoplasmic segment spans residues 237–253; it reads IPLKEKHGRSPAKRLEH. A helical transmembrane segment spans residues 254–272; that stretch reads VLHPWVAYLILPLFAFANA. The Periplasmic portion of the chain corresponds to 273 to 286; that stretch reads GVSLQGVTLDGLTS. Residues 287-310 form a helical membrane-spanning segment; the sequence is ILPLGIIAGLLIGKPLGISLFCWL. Residues 311–339 are Cytoplasmic-facing; it reads ALRLKLAHLPEGTTYQQIMVVGILCGIGF. The helical transmembrane segment at 340-350 threads the bilayer; that stretch reads TMSIFIASLAF. Residues 351-357 are Periplasmic-facing; it reads GSVDPEL. A helical membrane pass occupies residues 358 to 380; sequence INWAKLGILVGSISSAVIGYSWL. Residues 381 to 388 are Cytoplasmic-facing; that stretch reads RVRLRPSV.

Belongs to the NhaA Na(+)/H(+) (TC 2.A.33) antiporter family. In terms of assembly, monomer. Homodimer. Under routine stress conditions, the monomeric form is fully functional. However, the dimeric form is much more efficient in conferring growth resistance under extreme stress conditions.

It localises to the cell inner membrane. It catalyses the reaction Na(+)(in) + 2 H(+)(out) = Na(+)(out) + 2 H(+)(in). The catalysed reaction is Li(+)(in) + 2 H(+)(out) = Li(+)(out) + 2 H(+)(in). Activity is regulated by pH. Active at alkaline pH. Activity is strongly down-regulated below pH 6.5 and a dramatic increase in activity is observed upon increase of the pH from 6.5 to 8.5. Functionally, na(+)/H(+) antiporter that extrudes sodium in exchange for external protons. Plays an important role in the regulation of intracellular pH, cellular Na(+) content and cell volume. Catalyzes the exchange of 2 H(+) per Na(+). This stoichiometry applies at both neutral and alkaline pH values. In addition, can also transport lithium and is involved in lithium detoxification. Binding of the Li(+) and H(+) ligands to NhaA is coupled and antagonistic. This is Na(+)/H(+) antiporter NhaA from Escherichia coli (strain K12).